Consider the following 173-residue polypeptide: Lectin BRA-2 (173 aa).

The N-linked (GlcNAc...) asparagine glycan is linked to N39. 3 cysteine pairs are disulfide-bonded: C47–C61, C78–C168, and C144–C160. The region spanning 51–170 is the C-type lectin domain; that stretch reads PNGWVTSENK…NDRYNFVCEI (120 aa).

As to quaternary structure, homohexamer; disulfide-linked. In terms of tissue distribution, coelemic fluid.

Sugar-binding protein which recognizes specific carbohydrate structures and agglutinates a variety of animal cells by binding to cell-surface glycoproteins and glycolipids. Calcium-dependent lectin. Invertebrate lectins may be involved in defense functions. The chain is Lectin BRA-2 from Megabalanus rosa (Acorn barnacle).